Here is a 160-residue protein sequence, read N- to C-terminus: Peptidyl-prolyl cis-trans isomerase CYP18-1 (160 aa).

The PPIase cyclophilin-type domain occupies 3 to 153 (VTLHTNLGDI…AEIRLNRVTI (151 aa)).

The protein belongs to the cyclophilin-type PPIase family. In terms of tissue distribution, ubiquitous.

It is found in the cytoplasm. It carries out the reaction [protein]-peptidylproline (omega=180) = [protein]-peptidylproline (omega=0). Functionally, PPIases accelerate the folding of proteins. It catalyzes the cis-trans isomerization of proline imidic peptide bonds in oligopeptides. This Arabidopsis thaliana (Mouse-ear cress) protein is Peptidyl-prolyl cis-trans isomerase CYP18-1 (CYP18-1).